Consider the following 164-residue polypeptide: Lipoprotein signal peptidase (164 aa).

Helical transmembrane passes span 12-32, 70-90, and 102-122; these read WLWL…LILQ, WFFA…MYRS, and ALII…GFVV. Catalysis depends on residues aspartate 123 and aspartate 141. Residues 137-157 form a helical membrane-spanning segment; the sequence is FNLADTAICVGAALIVLEGFL.

It belongs to the peptidase A8 family.

The protein resides in the cell inner membrane. The catalysed reaction is Release of signal peptides from bacterial membrane prolipoproteins. Hydrolyzes -Xaa-Yaa-Zaa-|-(S,diacylglyceryl)Cys-, in which Xaa is hydrophobic (preferably Leu), and Yaa (Ala or Ser) and Zaa (Gly or Ala) have small, neutral side chains.. The protein operates within protein modification; lipoprotein biosynthesis (signal peptide cleavage). This protein specifically catalyzes the removal of signal peptides from prolipoproteins. The protein is Lipoprotein signal peptidase of Escherichia coli O9:H4 (strain HS).